The primary structure comprises 436 residues: ATP-dependent protease ATPase subunit HslU (436 aa).

ATP-binding positions include I19, 61-65 (GVGKT), D249, E314, and R386.

Belongs to the ClpX chaperone family. HslU subfamily. As to quaternary structure, a double ring-shaped homohexamer of HslV is capped on each side by a ring-shaped HslU homohexamer. The assembly of the HslU/HslV complex is dependent on binding of ATP.

The protein resides in the cytoplasm. In terms of biological role, ATPase subunit of a proteasome-like degradation complex; this subunit has chaperone activity. The binding of ATP and its subsequent hydrolysis by HslU are essential for unfolding of protein substrates subsequently hydrolyzed by HslV. HslU recognizes the N-terminal part of its protein substrates and unfolds these before they are guided to HslV for hydrolysis. The polypeptide is ATP-dependent protease ATPase subunit HslU (Bartonella tribocorum (strain CIP 105476 / IBS 506)).